A 232-amino-acid chain; its full sequence is Syntaxin-51 (232 aa).

Over 1 to 208 (MASSSDSWMR…NKNMRSGCSC (208 aa)) the chain is Cytoplasmic. The t-SNARE coiled-coil homology domain occupies 136-198 (RQVMREQDEG…RRVQKSLAVM (63 aa)). The helical; Anchor for type IV membrane protein transmembrane segment at 209–229 (MSMLLSVLGIVGLAVVIWMLV) threads the bilayer. Over 230–232 (KYM) the chain is Vesicular.

The protein belongs to the syntaxin family. In terms of assembly, interacts with VTI11 and either SYP21, or SYP22, or SYP61 in the prevacuolar compartment, or with VTI12 and SYP61 in the trans-Golgi network to form t-SNARE complexes. Expressed in root, leaf, stem, flower and silique.

It localises to the golgi apparatus. It is found in the trans-Golgi network membrane. The protein resides in the prevacuolar compartment membrane. In terms of biological role, vesicle trafficking protein that functions in the secretory pathway. In Arabidopsis thaliana (Mouse-ear cress), this protein is Syntaxin-51 (SYP51).